A 380-amino-acid chain; its full sequence is DNA replication and repair protein RecF (380 aa).

30–37 (GENAQGKT) lines the ATP pocket.

The protein belongs to the RecF family.

It localises to the cytoplasm. The RecF protein is involved in DNA metabolism; it is required for DNA replication and normal SOS inducibility. RecF binds preferentially to single-stranded, linear DNA. It also seems to bind ATP. The chain is DNA replication and repair protein RecF from Synechococcus sp. (strain JA-2-3B'a(2-13)) (Cyanobacteria bacterium Yellowstone B-Prime).